The following is a 1077-amino-acid chain: Receptor-like protein 1 (1077 aa).

The N-terminal stretch at 1-38 is a signal peptide; it reads MRTDERRRWWVKPKKHITLVFITITMIIQFQMKGCVSC. The N-cap stretch occupies residues 39-120; sequence VETERMGLLQ…SQTRSLNLSL (82 aa). Residues 39–1024 lie on the Extracellular side of the membrane; the sequence is VETERMGLLQ…NEEEGNVIDM (986 aa). Residues N117, N131, and N139 are each glycosylated (N-linked (GlcNAc...) asparagine). 12 LRR repeats span residues 124 to 147, 153 to 176, 177 to 201, 202 to 225, 227 to 250, 251 to 274, 275 to 299, 300 to 324, 326 to 348, 351 to 376, 378 to 397, and 399 to 424; these read FPQL…FLGF, LDKL…FLNA, ATSI…ELSN, MTNL…GLTD, RDLE…SLST, AKLK…GLES, LQEL…VLKD, LKML…GLEI, TSLQ…YLGI, LMKL…NLTH, RTLD…FVSG, and PSVL…LVNQ. N-linked (GlcNAc...) asparagine glycosylation is present at N201. N-linked (GlcNAc...) asparagine glycosylation occurs at N240. An N-linked (GlcNAc...) asparagine glycan is attached at N289. N373, N390, and N423 each carry an N-linked (GlcNAc...) asparagine glycan. An LRR 13; degenerate repeat occupies 425–449; the sequence is TRLTVFKLSSKVGVIQVQTESSWAP. LRR repeat units follow at residues 450-473, 474-498, 499-522, 524-545, 546-570, 572-594, 595-621, 623-643, 644-666, 667-694, 696-713, 714-737, 739-761, 762-785, 786-808, 877-901, 902-925, 927-949, and 951-970; these read LFQL…FLVH, QRDL…LVKN, NTRL…ILVH, LQVL…IGMV, FPNL…IGEM, SLQV…FLSG, CYSL…NLTG, VGLF…LLKS, KNLT…WIGR, ISRL…PWVE, MDIS…NVNF, PSLR…LFKA, GLEV…IDQT, SKLR…ICQL, SEVG…CFSK, LRYM…IGDL, QNIR…ISKL, GLES…LADL, and SLGY…PFKG. 2 N-linked (GlcNAc...) asparagine glycosylation sites follow: N460 and N498. Residue N553 is glycosylated (N-linked (GlcNAc...) asparagine). N618, N631, and N645 each carry an N-linked (GlcNAc...) asparagine glycan. N-linked (GlcNAc...) asparagine glycosylation is found at N749 and N771. N-linked (GlcNAc...) asparagine glycosylation occurs at N908. N-linked (GlcNAc...) asparagine glycans are attached at residues N956 and N961. The C-cap/acidic domain stretch occupies residues 971-1024; sequence HLVTFDERSYIGNAHLCGLPTNKNCISQRVPEPPSVSTHAKEEENEEEGNVIDM. Residues 1025-1045 traverse the membrane as a helical segment; sequence VWFYWTCAAVYISTSLALFAF. Over 1046–1077 the chain is Cytoplasmic; the sequence is LYIDSRWSREWFYRVDLCVHHILQFKRSSVCN.

It belongs to the RLP family.

Its subcellular location is the cell membrane. Its function is as follows. Involved in plant defense. Confers resistance to the bacterial pathogen Xanthomonas through recognition of the microbe-associated molecular pattern (MAMP) eMax. Functionality seems to depend on the presence of the receptor kinase SOBIR1 as an adapter protein. This Arabidopsis thaliana (Mouse-ear cress) protein is Receptor-like protein 1.